Here is a 553-residue protein sequence, read N- to C-terminus: Non-SCF-type F-box protein ROY1 (553 aa).

An F-box domain is found at 3 to 49 (FQDQDIFIVFSHASLFLNQNDLLSLSLTSKKMHDMIAIPRLYSNIHI).

As to quaternary structure, interacts with SKP1 and YPT32; SKP1 is required for the interaction with YPT32.

Its subcellular location is the cytoplasm. The protein localises to the nucleus. The protein resides in the cytoplasmic vesicle membrane. Non-SCF-type F-box protein involved in the endocytic with the vacuolar sorting pathway. Acts as a repressor of YPT52 by inhibiting the formation of active, GTP-bound, YPT52. Involved in the defense mechanism against methylmercury toxicity. The chain is Non-SCF-type F-box protein ROY1 (ROY1) from Saccharomyces cerevisiae (strain ATCC 204508 / S288c) (Baker's yeast).